We begin with the raw amino-acid sequence, 413 residues long: Patatin-like protein 3 (413 aa).

One can recognise a PNPLA domain in the interval 54 to 245 (LSVDGGARPE…ALGNPTAAAI (192 aa)). The GGXR signature appears at 58 to 61 (GGAR). The active-site Nucleophile is the Ser100. The segment at 384–413 (EHGRRKQHVPPAASGGGGGGLDCHVSKKQP) is disordered.

Belongs to the patatin family.

Its function is as follows. Possesses non-specific lipolytic acyl hydrolase (LAH) activity. Hydrolyzes phospholipids as well as galactolipids. May play a role in disease resistance. The sequence is that of Patatin-like protein 3 (PLP3) from Oryza sativa subsp. indica (Rice).